A 77-amino-acid chain; its full sequence is Conotoxin PnMEKL-04 (77 aa).

The signal sequence occupies residues 1 to 19 (MEKLTILLLVAAVLMSTQA). A propeptide spanning residues 20-45 (LPQGGGENRLKENIKFLLKRKTAADR) is cleaved from the precursor. Cystine bridges form between C51–C65, C58–C69, and C64–C73.

Belongs to the conotoxin O2 superfamily. As to expression, expressed by the venom duct.

Its subcellular location is the secreted. The protein is Conotoxin PnMEKL-04 of Conus pennaceus (Feathered cone).